The chain runs to 318 residues: Transaldolase (318 aa).

K132 serves as the catalytic Schiff-base intermediate with substrate.

This sequence belongs to the transaldolase family. Type 1 subfamily. Homodimer.

It localises to the cytoplasm. It carries out the reaction D-sedoheptulose 7-phosphate + D-glyceraldehyde 3-phosphate = D-erythrose 4-phosphate + beta-D-fructose 6-phosphate. It participates in carbohydrate degradation; pentose phosphate pathway; D-glyceraldehyde 3-phosphate and beta-D-fructose 6-phosphate from D-ribose 5-phosphate and D-xylulose 5-phosphate (non-oxidative stage): step 2/3. Transaldolase is important for the balance of metabolites in the pentose-phosphate pathway. The chain is Transaldolase from Shewanella sp. (strain MR-7).